Reading from the N-terminus, the 455-residue chain is MTTTKIKTQWACSECGSYSPKWLGQCPGCFQWNTLVEEIHSSKLKTSSYPLSSTTPVPLNTVKFQEEIRISTRSKGWNRLLGGGTVCGSLTLLGGEPGIGKSTLLLQISSQFAEQGYKVLYVCGEESVSQTSLRAQRLQISSSNIFLFPETNLEDIKQQISDLAPDILIIDSIQIIFSPSLSSAPGSVAQVRETTAELMHIAKQKQITTFIIGHVTKSGEIAGPRILEHLVDTVLYFEGNAHTNYRMIRSVKNRFGPTNELLILSMQTDGLHEVENPSGFFLQEKVVETTGSTIIPIVEGSETLLVEVQALVSSSPFSNPVRKTSGFDPNRFSLLLAVLEKRANVKLYTSDVFLSIAGGLKITQPSADLGAVLSVVSSLYNRYLPKNYTYTGEIGLGGEIRHVTHIEHRIKESIIMGFKGIVMPSGQIKGLPKEYLDQIDIIGVKTIKDAVRLLQ.

A C4-type zinc finger spans residues 12–29 (CSECGSYSPKWLGQCPGC). 95 to 102 (GEPGIGKS) is an ATP binding site. Positions 252–256 (KNRFG) match the RadA KNRFG motif motif. Residues 351 to 455 (DVFLSIAGGL…TIKDAVRLLQ (105 aa)) are lon-protease-like.

It belongs to the RecA family. RadA subfamily.

Functionally, DNA-dependent ATPase involved in processing of recombination intermediates, plays a role in repairing DNA breaks. Stimulates the branch migration of RecA-mediated strand transfer reactions, allowing the 3' invading strand to extend heteroduplex DNA faster. Binds ssDNA in the presence of ADP but not other nucleotides, has ATPase activity that is stimulated by ssDNA and various branched DNA structures, but inhibited by SSB. Does not have RecA's homology-searching function. This Chlamydia muridarum (strain MoPn / Nigg) protein is DNA repair protein RadA.